Reading from the N-terminus, the 374-residue chain is UDP-N-acetylglucosamine--N-acetylmuramyl-(pentapeptide) pyrophosphoryl-undecaprenol N-acetylglucosamine transferase (374 aa).

UDP-N-acetyl-alpha-D-glucosamine contacts are provided by residues 35–37 (TGG), N144, R185, S211, and Q305.

It belongs to the glycosyltransferase 28 family. MurG subfamily.

Its subcellular location is the cell inner membrane. It carries out the reaction di-trans,octa-cis-undecaprenyl diphospho-N-acetyl-alpha-D-muramoyl-L-alanyl-D-glutamyl-meso-2,6-diaminopimeloyl-D-alanyl-D-alanine + UDP-N-acetyl-alpha-D-glucosamine = di-trans,octa-cis-undecaprenyl diphospho-[N-acetyl-alpha-D-glucosaminyl-(1-&gt;4)]-N-acetyl-alpha-D-muramoyl-L-alanyl-D-glutamyl-meso-2,6-diaminopimeloyl-D-alanyl-D-alanine + UDP + H(+). It functions in the pathway cell wall biogenesis; peptidoglycan biosynthesis. In terms of biological role, cell wall formation. Catalyzes the transfer of a GlcNAc subunit on undecaprenyl-pyrophosphoryl-MurNAc-pentapeptide (lipid intermediate I) to form undecaprenyl-pyrophosphoryl-MurNAc-(pentapeptide)GlcNAc (lipid intermediate II). This Trichodesmium erythraeum (strain IMS101) protein is UDP-N-acetylglucosamine--N-acetylmuramyl-(pentapeptide) pyrophosphoryl-undecaprenol N-acetylglucosamine transferase.